Reading from the N-terminus, the 110-residue chain is Large ribosomal subunit protein uL22 (110 aa).

The protein belongs to the universal ribosomal protein uL22 family. In terms of assembly, part of the 50S ribosomal subunit.

Functionally, this protein binds specifically to 23S rRNA; its binding is stimulated by other ribosomal proteins, e.g. L4, L17, and L20. It is important during the early stages of 50S assembly. It makes multiple contacts with different domains of the 23S rRNA in the assembled 50S subunit and ribosome. The globular domain of the protein is located near the polypeptide exit tunnel on the outside of the subunit, while an extended beta-hairpin is found that lines the wall of the exit tunnel in the center of the 70S ribosome. This Marinomonas sp. (strain MWYL1) protein is Large ribosomal subunit protein uL22.